The following is a 143-amino-acid chain: Sarcoplasmic/endoplasmic reticulum calcium ATPase (143 aa).

The protein belongs to the cation transport ATPase (P-type) (TC 3.A.3) family. Type IIA subfamily.

It localises to the endoplasmic reticulum membrane. The protein localises to the sarcoplasmic reticulum membrane. It carries out the reaction Ca(2+)(in) + ATP + H2O = Ca(2+)(out) + ADP + phosphate + H(+). Functionally, this magnesium-dependent enzyme catalyzes the hydrolysis of ATP coupled with the transport of calcium. Transports calcium ions from the cytosol into the sarcoplasmic/endoplasmic reticulum lumen. Contributes to calcium sequestration involved in muscular excitation/contraction. The polypeptide is Sarcoplasmic/endoplasmic reticulum calcium ATPase (Chionoecetes opilio (Atlantic snow crab)).